The chain runs to 240 residues: Lectin (240 aa).

2 residues coordinate Mn(2+): E127 and D129. 4 residues coordinate Ca(2+): D129, Y131, N133, and D138. D138 and H143 together coordinate Mn(2+).

It belongs to the leguminous lectin family. In terms of assembly, heterotetramer of two alpha and two beta chains; disulfide bond linked.

Binds preferentially to oligosaccharides bearing the sequence Man-alpha-1-&gt;2 Man-alpha-1-&gt;6 Man-alpha-1-&gt;6Man found in early steps of glycoprotein processing in the endoplasmic reticulum. It binds weakly to highly processed oligosaccharide structures. This is Lectin from Leucomphalos mildbraedii (Bowringia mildbraedii).